We begin with the raw amino-acid sequence, 396 residues long: Elongation factor Tu 2 (396 aa).

In terms of domain architecture, tr-type G spans 10 to 206; it reads KPHVNVGTIG…TLDTYIPEPE (197 aa). The G1 stretch occupies residues 19-26; that stretch reads GHVDHGKT. Position 19-26 (19-26) interacts with GTP; it reads GHVDHGKT. A Mg(2+)-binding site is contributed by T26. The segment at 60–64 is G2; that stretch reads GITIN. Residues 81 to 84 form a G3 region; it reads DCPG. GTP-binding positions include 81–85 and 136–139; these read DCPGH and NKCD. Residues 136–139 are G4; the sequence is NKCD. The tract at residues 174–176 is G5; sequence SAL.

This sequence belongs to the TRAFAC class translation factor GTPase superfamily. Classic translation factor GTPase family. EF-Tu/EF-1A subfamily. As to quaternary structure, monomer.

The protein localises to the cytoplasm. The catalysed reaction is GTP + H2O = GDP + phosphate + H(+). Its function is as follows. GTP hydrolase that promotes the GTP-dependent binding of aminoacyl-tRNA to the A-site of ribosomes during protein biosynthesis. The sequence is that of Elongation factor Tu 2 from Psychrobacter sp. (strain PRwf-1).